The primary structure comprises 161 residues: Large ribosomal subunit protein uL15 (161 aa).

The segment at 1 to 43 (MKLSDIADNAGARKKRMRVGRGIGSGKGKTSGRGGKGQTARSG) is disordered. Positions 21–37 (RGIGSGKGKTSGRGGKG) are enriched in gly residues.

Belongs to the universal ribosomal protein uL15 family. Part of the 50S ribosomal subunit.

Functionally, binds to the 23S rRNA. This is Large ribosomal subunit protein uL15 from Bradyrhizobium sp. (strain ORS 278).